A 237-amino-acid chain; its full sequence is Ly6/PLAUR domain-containing protein 8 (237 aa).

Residues 1–19 (MKGILVAGITAVLVAAVES) form the signal peptide. 8 N-linked (GlcNAc...) asparagine glycosylation sites follow: Asn-45, Asn-73, Asn-107, Asn-118, Asn-132, Asn-172, Asn-175, and Asn-185. In terms of domain architecture, UPAR/Ly6 spans 125 to 176 (CPACYESNGTSCHGKPWKCYEEEQCVFLVAELKNDIESKSLVLKGCSNVSNA). A lipid anchor (GPI-anchor amidated asparagine) is attached at Asn-215. Positions 216 to 237 (VGSKASLYLLALASLLLRGLLP) are cleaved as a propeptide — removed in mature form.

The protein belongs to the CNF-like-inhibitor family. Post-translationally, highly N-glycosylated. Not O-glycosylated. In terms of processing, GPI-anchored. The GPI-anchor is cleaved, leading to secretion into the colonic lumen. In terms of tissue distribution, expressed in the large intestine. Preferentially expressed on the epithelial layer exposed to the lumen (at protein level).

Its subcellular location is the cell membrane. The protein resides in the secreted. Secreted protein specifically required to prevent invasion of Gram-negative bacteria in the inner mucus layer of the colon epithelium, a portion of the large intestine which is free of commensal microbiota. Prevents invasion of flagellated microbiota by binding to the flagellum of bacteria, such as P.mirabilis, thereby inhibiting bacterial motility in the intestinal lumen. Segregation of intestinal bacteria and epithelial cells in the colon is required to preserve intestinal homeostasis. The polypeptide is Ly6/PLAUR domain-containing protein 8 (Homo sapiens (Human)).